A 177-amino-acid chain; its full sequence is Large ribosomal subunit protein uL10 (177 aa).

Belongs to the universal ribosomal protein uL10 family. As to quaternary structure, part of the ribosomal stalk of the 50S ribosomal subunit. The N-terminus interacts with L11 and the large rRNA to form the base of the stalk. The C-terminus forms an elongated spine to which L12 dimers bind in a sequential fashion forming a multimeric L10(L12)X complex.

In terms of biological role, forms part of the ribosomal stalk, playing a central role in the interaction of the ribosome with GTP-bound translation factors. The chain is Large ribosomal subunit protein uL10 from Variovorax paradoxus (strain S110).